A 208-amino-acid chain; its full sequence is FMN-dependent NADH:quinone oxidoreductase 2 (208 aa).

It belongs to the azoreductase type 1 family. Homodimer. FMN serves as cofactor.

It catalyses the reaction 2 a quinone + NADH + H(+) = 2 a 1,4-benzosemiquinone + NAD(+). The enzyme catalyses N,N-dimethyl-1,4-phenylenediamine + anthranilate + 2 NAD(+) = 2-(4-dimethylaminophenyl)diazenylbenzoate + 2 NADH + 2 H(+). In terms of biological role, quinone reductase that provides resistance to thiol-specific stress caused by electrophilic quinones. Functionally, also exhibits azoreductase activity. Catalyzes the reductive cleavage of the azo bond in aromatic azo compounds to the corresponding amines. In Bacillus anthracis, this protein is FMN-dependent NADH:quinone oxidoreductase 2.